The chain runs to 669 residues: Dymeclin (669 aa).

G2 carries the N-myristoyl glycine lipid modification.

It belongs to the dymeclin family. As to quaternary structure, interacts with GOLM1 and PPIB. Post-translationally, myristoylated in vitro; myristoylation is not essential for protein targeting to Golgi compartment. Expressed in most embryo-fetal and adult tissues. Abundant in primary chondrocytes, osteoblasts, cerebellum, kidney, lung, stomach, heart, pancreas and fetal brain. Very low or no expression in the spleen, thymus, esophagus, bladder and thyroid gland.

It localises to the cytoplasm. Its subcellular location is the golgi apparatus. It is found in the membrane. Necessary for correct organization of Golgi apparatus. Involved in bone development. The sequence is that of Dymeclin (DYM) from Homo sapiens (Human).